Consider the following 75-residue polypeptide: uncharacterized protein (75 aa).

An N-terminal signal peptide occupies residues 1-19 (MKKTAAIISACMLTFALSA). C20 carries N-palmitoyl cysteine lipidation. C20 carries S-diacylglycerol cysteine lipidation.

The protein to E.coli YgdR.

Its subcellular location is the cell membrane. This is an uncharacterized protein from Escherichia coli O6:H1 (strain CFT073 / ATCC 700928 / UPEC).